The primary structure comprises 376 residues: Dihydroorotate dehydrogenase (quinone) (376 aa).

FMN contacts are provided by residues 74-78 (AGFDK) and Thr98. A substrate-binding site is contributed by Lys78. 123-127 (NHMGF) serves as a coordination point for substrate. The FMN site is built by Asn152 and Asn185. Asn185 contacts substrate. Ser188 serves as the catalytic Nucleophile. Asn190 lines the substrate pocket. 2 residues coordinate FMN: Lys223 and Thr251. A substrate-binding site is contributed by 252–253 (NT). FMN is bound by residues Gly280, Gly309, and 330–331 (YT). Residues 352–376 (RNPAPSSPERMPTGIQSGRKIVMDP) are disordered.

This sequence belongs to the dihydroorotate dehydrogenase family. Type 2 subfamily. In terms of assembly, monomer. FMN is required as a cofactor.

Its subcellular location is the cell membrane. The enzyme catalyses (S)-dihydroorotate + a quinone = orotate + a quinol. Its pathway is pyrimidine metabolism; UMP biosynthesis via de novo pathway; orotate from (S)-dihydroorotate (quinone route): step 1/1. In terms of biological role, catalyzes the conversion of dihydroorotate to orotate with quinone as electron acceptor. The chain is Dihydroorotate dehydrogenase (quinone) from Synechococcus sp. (strain JA-3-3Ab) (Cyanobacteria bacterium Yellowstone A-Prime).